We begin with the raw amino-acid sequence, 378 residues long: POU domain, class 3, transcription factor 2 (378 aa).

Disordered stretches follow at residues 1-28 (MATT…SMQQ), 86-118 (SPRD…HDSR), and 151-205 (LIPG…TPTS). Residues 164–181 (MRDAHEDHHSPHLSDHGH) show a composition bias toward basic and acidic residues. Residues 200–274 (EDTPTSDDLE…LLNKWLEEAD (75 aa)) enclose the POU-specific domain. Position 279 is a phosphoserine (Ser279). The homeobox DNA-binding region spans 292 to 351 (KRKKRTSIEVSVKGALESHFLKCPKPAASEITSLADSLQLEKEVVRVWFCNRRQKEKRMT). The interval 347-378 (EKRMTPPGGPLPGTEDVYGDTPPHHGVQTPVQ) is disordered.

It belongs to the POU transcription factor family. Class-3 subfamily. As to expression, predominantly expressed in the central nervous system, with strong expression in the cerebellum.

It is found in the nucleus. Functionally, transcription factor that may play important roles in patterning the embryonic brain. The sequence is that of POU domain, class 3, transcription factor 2 (pou3f2) from Danio rerio (Zebrafish).